The sequence spans 360 residues: Peptide chain release factor 1 (360 aa).

The residue at position 237 (Gln237) is an N5-methylglutamine.

Belongs to the prokaryotic/mitochondrial release factor family. In terms of processing, methylated by PrmC. Methylation increases the termination efficiency of RF1.

It localises to the cytoplasm. Functionally, peptide chain release factor 1 directs the termination of translation in response to the peptide chain termination codons UAG and UAA. This is Peptide chain release factor 1 from Pseudomonas entomophila (strain L48).